A 442-amino-acid chain; its full sequence is D-inositol 3-phosphate glycosyltransferase (442 aa).

1D-myo-inositol 3-phosphate is bound at residue histidine 15. Residues 21-22 (QP) and glycine 29 each bind UDP-N-acetyl-alpha-D-glucosamine. 1D-myo-inositol 3-phosphate contacts are provided by residues 26 to 31 (DAGGMN), lysine 84, tyrosine 117, threonine 141, and arginine 161. Positions 235, 240, and 299 each coordinate UDP-N-acetyl-alpha-D-glucosamine. Mg(2+)-binding residues include tyrosine 308, arginine 309, and serine 311. Glutamate 321 and glutamate 329 together coordinate UDP-N-acetyl-alpha-D-glucosamine. Threonine 335 contacts Mg(2+).

It belongs to the glycosyltransferase group 1 family. MshA subfamily. In terms of assembly, homodimer.

The enzyme catalyses 1D-myo-inositol 3-phosphate + UDP-N-acetyl-alpha-D-glucosamine = 1D-myo-inositol 2-acetamido-2-deoxy-alpha-D-glucopyranoside 3-phosphate + UDP + H(+). In terms of biological role, catalyzes the transfer of a N-acetyl-glucosamine moiety to 1D-myo-inositol 3-phosphate to produce 1D-myo-inositol 2-acetamido-2-deoxy-glucopyranoside 3-phosphate in the mycothiol biosynthesis pathway. This Rhodococcus erythropolis (strain PR4 / NBRC 100887) protein is D-inositol 3-phosphate glycosyltransferase.